The sequence spans 292 residues: (S)-phenoxypropionate/alpha-ketoglutarate-dioxygenase (292 aa).

Residues H108 and D110 each coordinate Fe cation. T135 and W247 together coordinate 2-oxoglutarate. H262 serves as a coordination point for Fe cation. R273 lines the 2-oxoglutarate pocket.

It belongs to the TfdA dioxygenase family. Monomer. Fe cation is required as a cofactor. The cofactor is L-ascorbate.

The enzyme catalyses (S)-2-(4-chloro-2-methylphenoxy)propanoate + 2-oxoglutarate + O2 = 2-methyl-4-chlorophenol + pyruvate + succinate + CO2. The catalysed reaction is (S)-(2,4-dichlorophenoxy)propanoate + 2-oxoglutarate + O2 = 2,4-dichlorophenol + pyruvate + succinate + CO2. The protein operates within xenobiotic degradation; 2-(2,4-dichlorophenoxy)propanoate degradation. Its activity is regulated as follows. Inhibited by divalent cations, most significantly by copper and nickel, and by diethylpyrocarbonate (DEPC). In terms of biological role, involved in the degradation of the phenoxypropionate herbicides. Catalyzes the enantiospecific cleavage of the ether bond in the herbicid S-dichlorprop ((S)-2-(2,4-dichlorophenoxy)propionate)(S-2,4-DP) and S-mecoprop ((S)-2-(4-chloro-2-methylphenoxy)propionate)(S-2,4-MCPP). It can also accept (RS)-2-(4-chlorophenoxy)propionate, (RS)-2-(m-chlorophenoxy)propionate and phenoxyacetate derivatives such as 2,4-dichlorophenoxyacetate (2,4-D), however it can only accept 2-oxoglutarate as oxygen acceptor. The sequence is that of (S)-phenoxypropionate/alpha-ketoglutarate-dioxygenase from Delftia acidovorans (Pseudomonas acidovorans).